Here is a 707-residue protein sequence, read N- to C-terminus: NADP(+)-dependent formate dehydrogenase subunit beta (707 aa).

As to quaternary structure, heterotetramer composed of two alpha (FdhA) and two beta (FdhB) subunits.

It is found in the cytoplasm. It carries out the reaction formate + NADP(+) = CO2 + NADPH. With respect to regulation, activity is very sensitive to oxygen. The activity in growing cells is enhanced when selenite and molybdate are added together to the growth medium. Tungstate replaces and is better than molybdate. Selenite is incorporated into the enzyme. Requires a sulfhydryl compound for activity. Inhibited by cyanide, EDTA, hypophosphite and mercaptoethanol. Sulfite inhibits the activity with NADP but not with methyl viologen as electron acceptor. In terms of biological role, component of a dehydrogenase that catalyzes the NADP-dependent reduction of CO(2) to formate, the first step in the synthesis of the methyl group of acetate during synthesis of acetate from CO(2). In vitro, can use methyl viologen and benzyl viologen in addition to its natural electron acceptor. This is NADP(+)-dependent formate dehydrogenase subunit beta from Moorella thermoacetica (Clostridium thermoaceticum).